Reading from the N-terminus, the 208-residue chain is CASP-like protein 1D1 (208 aa).

Positions 1-36 (MSSVDTEKPAPPPLETEAPPPPPPPPPPPPPPPPPP) are disordered. At 1–41 (MSSVDTEKPAPPPLETEAPPPPPPPPPPPPPPPPPPAGYSA) the chain is on the cytoplasmic side. Residues 9–36 (PAPPPLETEAPPPPPPPPPPPPPPPPPP) show a composition bias toward pro residues. A helical membrane pass occupies residues 42 to 62 (LDVVLRILLLGSAVASVVVMV). At 63-89 (TSVQTKLIAVAGVPVLVSNKAKFQNSP) the chain is on the extracellular side. The chain crosses the membrane as a helical span at residues 90–110 (AFIYFVAALSVVGLYSIITTL). Residues 111–133 (ASFIFISKPSCSTKTILHLAIWD) lie on the Cytoplasmic side of the membrane. The chain crosses the membrane as a helical span at residues 134–154 (VLMLGLAASATGTAGGVAYVG). The Extracellular portion of the chain corresponds to 155-180 (LKGNSHVGWNKVCNTYDKFCRHVGGS). The helical transmembrane segment at 181 to 201 (IAVALFASILLVLLVWLSLFT) threads the bilayer. Over 202-208 (LYSRIRK) the chain is Cytoplasmic.

This sequence belongs to the Casparian strip membrane proteins (CASP) family. In terms of assembly, homodimer and heterodimers.

The protein localises to the cell membrane. This chain is CASP-like protein 1D1, found in Vitis vinifera (Grape).